The sequence spans 319 residues: Cobalamin biosynthesis protein CbiB (319 aa).

The next 5 membrane-spanning stretches (helical) occupy residues 56–76, 82–102, 153–173, 204–224, and 296–316; these read VMWI…LALA, WLGW…RSLA, VDGI…LAMA, VANY…AGLC, and LMWG…CWLS.

Belongs to the CobD/CbiB family.

Its subcellular location is the cell membrane. Its pathway is cofactor biosynthesis; adenosylcobalamin biosynthesis. Functionally, converts cobyric acid to cobinamide by the addition of aminopropanol on the F carboxylic group. However, the true cosubstrate could be (R)-1-amino-2-propanol O-2-phosphate, leading to cobinamide phosphate. In Salmonella arizonae (strain ATCC BAA-731 / CDC346-86 / RSK2980), this protein is Cobalamin biosynthesis protein CbiB.